Here is a 558-residue protein sequence, read N- to C-terminus: ATP synthase subunit alpha (558 aa).

172–179 contacts ATP; the sequence is GDRKTGKT. The segment at 536–558 is disordered; the sequence is ESVKVHQAIPAKTSEKSKNSTPR. The segment covering 548 to 558 has biased composition (basic and acidic residues); that stretch reads TSEKSKNSTPR.

Belongs to the ATPase alpha/beta chains family. In terms of assembly, F-type ATPases have 2 components, CF(1) - the catalytic core - and CF(0) - the membrane proton channel. CF(1) has five subunits: alpha(3), beta(3), gamma(1), delta(1), epsilon(1). CF(0) has three main subunits: a(1), b(2) and c(9-12). The alpha and beta chains form an alternating ring which encloses part of the gamma chain. CF(1) is attached to CF(0) by a central stalk formed by the gamma and epsilon chains, while a peripheral stalk is formed by the delta and b chains.

It is found in the cell membrane. The catalysed reaction is ATP + H2O + 4 H(+)(in) = ADP + phosphate + 5 H(+)(out). Its function is as follows. Produces ATP from ADP in the presence of a proton gradient across the membrane. The alpha chain is a regulatory subunit. In Mycobacterium leprae (strain Br4923), this protein is ATP synthase subunit alpha.